The primary structure comprises 283 residues: ATP phosphoribosyltransferase (283 aa).

The protein belongs to the ATP phosphoribosyltransferase family. Long subfamily. It depends on Mg(2+) as a cofactor.

Its subcellular location is the cytoplasm. It carries out the reaction 1-(5-phospho-beta-D-ribosyl)-ATP + diphosphate = 5-phospho-alpha-D-ribose 1-diphosphate + ATP. It functions in the pathway amino-acid biosynthesis; L-histidine biosynthesis; L-histidine from 5-phospho-alpha-D-ribose 1-diphosphate: step 1/9. Its activity is regulated as follows. Feedback inhibited by histidine. Its function is as follows. Catalyzes the condensation of ATP and 5-phosphoribose 1-diphosphate to form N'-(5'-phosphoribosyl)-ATP (PR-ATP). Has a crucial role in the pathway because the rate of histidine biosynthesis seems to be controlled primarily by regulation of HisG enzymatic activity. The chain is ATP phosphoribosyltransferase from Salinibacter ruber (strain DSM 13855 / M31).